The primary structure comprises 148 residues: uncharacterized protein (148 aa).

A compositionally biased stretch (low complexity) spans 37-94 (NNNNYNNNNKNNNNNNNNNNNNNNNNNNNNNNNYINSCNSNNNNNNNNNNTKNNNINS). Residues 37-99 (NNNNYNNNNK…NNINSRTDKN (63 aa)) are disordered.

This is an uncharacterized protein from Dictyostelium discoideum (Social amoeba).